Reading from the N-terminus, the 2134-residue chain is Genome polyprotein (2134 aa).

Residues 1–1377 (MSKLFSTVGR…WLFERLKTSK (1377 aa)) are Cytoplasmic-facing. The LRAT domain maps to 781–882 (IVSCSGEKAK…GDYGTKEGEK (102 aa)). Active-site residues include His791 and His802. The Acyl-thioester intermediate role is filled by Cys863. Positions 1127–1289 (LNKLGRLDKP…EEFSTHAMLD (163 aa)) constitute an SF3 helicase domain. 1153–1160 (GNRGGGKS) provides a ligand contact to ATP. An intramembrane segment occupies 1378–1392 (WYILGCVGAVLAVSA). The Cytoplasmic portion of the chain corresponds to 1393-2134 (LGVFAYHMIK…VKYRFIDDNF (742 aa)). An O-(5'-phospho-RNA)-tyrosine modification is found at Tyr1415. The 213-residue stretch at 1431–1643 (DAQSVVDISN…ITKEMIEEML (213 aa)) folds into the Peptidase C3 domain. Catalysis depends on for protease 3C activity residues His1477, Asp1515, and Cys1603. The RdRp catalytic domain maps to 1880–2001 (DLVVGLDFSN…CIKKEYLDQK (122 aa)).

Belongs to the picornaviridae polyprotein family. In terms of processing, specific enzymatic cleavages by the viral protease in vivo yield a variety of precursors and mature proteins. During virion maturation, non-infectious particles are rendered infectious following cleavage of VP0. This maturation cleavage is followed by a conformational change of the particle. Post-translationally, VPg is uridylylated by the polymerase and is covalently linked to the 5'-end of genomic RNA. This uridylylated form acts as a nucleotide-peptide primer for the polymerase.

Its subcellular location is the virion. The protein localises to the host cytoplasm. It localises to the host cytoplasmic vesicle membrane. The catalysed reaction is RNA(n) + a ribonucleoside 5'-triphosphate = RNA(n+1) + diphosphate. The enzyme catalyses a ribonucleoside 5'-triphosphate + H2O = a ribonucleoside 5'-diphosphate + phosphate + H(+). It carries out the reaction Selective cleavage of Gln-|-Gly bond in the poliovirus polyprotein. In other picornavirus reactions Glu may be substituted for Gln, and Ser or Thr for Gly.. In terms of biological role, capsid proteins VP1, VP2, and VP3 form a closed capsid enclosing the viral positive strand RNA genome. All these proteins contain a beta-sheet structure called beta-barrel jelly roll. Together they form an icosahedral capsid (T=3) composed of 60 copies of each VP1, VP2, and VP3, with a diameter of approximately 300 Angstroms. VP1 is situated at the 12 fivefold axes, whereas VP2 and VP3 are located at the quasi-sixfold axes. Its function is as follows. VP0 precursor is a component of immature procapsids. The N-terminal domain of VP0, protein VP4, is needed for the assembly of 12 pentamers into the icosahedral structure. Unlike other picornaviruses, AEV VP4 may not be myristoylated. Protein 2B and 2BC precursor affect membrane integrity and cause an increase in membrane permeability. Functionally, associates with and induces structural rearrangements of intracellular membranes. It displays RNA-binding, nucleotide binding and NTPase activities. In terms of biological role, protein 3A, via its hydrophobic domain, serves as membrane anchor. Its function is as follows. Protein 3B is covalently linked to the 5'-end of both the positive-strand and negative-strand genomic RNAs. It acts as a genome-linked replication primer. Cysteine protease that generates mature viral proteins from the precursor polyprotein. In addition to its proteolytic activity, it binds to viral RNA, and thus influences viral genome replication. RNA and substrate bind cooperatively to the protease. Functionally, RNA-directed RNA polymerase 3D-POL replicates genomic and antigenomic RNA by recognizing replications specific signals. The polypeptide is Genome polyprotein (Avian encephalomyelitis virus (strain Van Reokel) (AEV)).